The following is a 55-amino-acid chain: Large ribosomal subunit protein bL33 (55 aa).

It belongs to the bacterial ribosomal protein bL33 family.

This is Large ribosomal subunit protein bL33 from Allorhizobium ampelinum (strain ATCC BAA-846 / DSM 112012 / S4) (Agrobacterium vitis (strain S4)).